The sequence spans 382 residues: D-galactonate dehydratase (382 aa).

Mg(2+) is bound at residue D183. Residue H185 is the Proton donor of the active site. Residues E209 and E235 each contribute to the Mg(2+) site. H285 (proton acceptor) is an active-site residue.

It belongs to the mandelate racemase/muconate lactonizing enzyme family. GalD subfamily. The cofactor is Mg(2+).

It carries out the reaction D-galactonate = 2-dehydro-3-deoxy-D-galactonate + H2O. Its pathway is carbohydrate acid metabolism; D-galactonate degradation; D-glyceraldehyde 3-phosphate and pyruvate from D-galactonate: step 1/3. Catalyzes the dehydration of D-galactonate to 2-keto-3-deoxy-D-galactonate. This is D-galactonate dehydratase from Salmonella choleraesuis (strain SC-B67).